Consider the following 273-residue polypeptide: MDKYAVIGHPIGHSKSPRIHALFAGQTGQDMAYEAVFAPLDGFADTVRRLVAEGYRGFNVTVPFKGEAFKLADALTDRARCAGAVNTLKVQDDGTLLGENTDGAGLVTDLVNNLGVAIAGRDLVVLGAGGAVRGVLAPLLALGPASLHIANRTGARAEQLARDFADLGPVTGGDLDSLMGRQAHVLINGTSAGLDDEVPPLPDDLLHADGGCYDMMYGDRPTAFLRWAAAHGAAWTADGLGMLVEQAAESFALWRGVRPQTGPVIQILRPVQP.

Shikimate is bound by residues 14–16 (SKS) and Thr61. The Proton acceptor role is filled by Lys65. Asp77 provides a ligand contact to NADP(+). 2 residues coordinate shikimate: Asn86 and Asp102. NADP(+) is bound by residues 127–131 (GAGGA), 151–156 (NRTGAR), and Met215. A shikimate-binding site is contributed by Tyr217. Position 239 (Gly239) interacts with NADP(+).

Belongs to the shikimate dehydrogenase family. In terms of assembly, homodimer.

The enzyme catalyses shikimate + NADP(+) = 3-dehydroshikimate + NADPH + H(+). The protein operates within metabolic intermediate biosynthesis; chorismate biosynthesis; chorismate from D-erythrose 4-phosphate and phosphoenolpyruvate: step 4/7. Its function is as follows. Involved in the biosynthesis of the chorismate, which leads to the biosynthesis of aromatic amino acids. Catalyzes the reversible NADPH linked reduction of 3-dehydroshikimate (DHSA) to yield shikimate (SA). The chain is Shikimate dehydrogenase (NADP(+)) from Thioalkalivibrio sulfidiphilus (strain HL-EbGR7).